Reading from the N-terminus, the 465-residue chain is Glutamate--tRNA ligase (465 aa).

A 'HIGH' region motif is present at residues 5-15 (PSPTGMFHVGG). Zn(2+) is bound by residues Cys96, Cys98, Cys118, and Asp120. The short motif at 228-232 (KLSKR) is the 'KMSKS' region element. Residue Lys231 participates in ATP binding.

This sequence belongs to the class-I aminoacyl-tRNA synthetase family. Glutamate--tRNA ligase type 1 subfamily. Monomer. The cofactor is Zn(2+).

Its subcellular location is the cytoplasm. It carries out the reaction tRNA(Glu) + L-glutamate + ATP = L-glutamyl-tRNA(Glu) + AMP + diphosphate. Functionally, catalyzes the attachment of glutamate to tRNA(Glu) in a two-step reaction: glutamate is first activated by ATP to form Glu-AMP and then transferred to the acceptor end of tRNA(Glu). This is Glutamate--tRNA ligase from Salinispora tropica (strain ATCC BAA-916 / DSM 44818 / JCM 13857 / NBRC 105044 / CNB-440).